The chain runs to 779 residues: 3-isopropylmalate dehydratase (779 aa).

Residues C360, C421, and C424 each contribute to the [4Fe-4S] cluster site. Positions 484 to 518 (QDQSSPKVEVTSEDEKELESAAYDHAEPVQPEDAP) are disordered. S488 carries the phosphoserine modification. T494 bears the Phosphothreonine mark. S495 bears the Phosphoserine mark. The span at 501-510 (LESAAYDHAE) shows a compositional bias: basic and acidic residues.

The protein belongs to the aconitase/IPM isomerase family. Monomer. [4Fe-4S] cluster is required as a cofactor.

It catalyses the reaction (2R,3S)-3-isopropylmalate = (2S)-2-isopropylmalate. Its pathway is amino-acid biosynthesis; L-leucine biosynthesis; L-leucine from 3-methyl-2-oxobutanoate: step 2/4. In terms of biological role, catalyzes the isomerization between 2-isopropylmalate and 3-isopropylmalate, via the formation of 2-isopropylmaleate. This chain is 3-isopropylmalate dehydratase (LEU1), found in Saccharomyces cerevisiae (strain ATCC 204508 / S288c) (Baker's yeast).